Here is a 380-residue protein sequence, read N- to C-terminus: O-antigen polymerase (380 aa).

A run of 12 helical transmembrane segments spans residues 1–21, 27–47, 55–75, 94–114, 132–152, 169–189, 201–221, 229–249, 282–302, 306–326, 332–352, and 353–373; these read MTYF…RLTP, NIVL…TFNE, ATTL…YILI, YIYW…IILL, SISG…MYLA, FLLA…VYIV, LIYG…LGKF, IISA…AAFN, ILPW…FAPW, LGLY…GIWF, LAVG…FFQE, and HYLL…LLAM.

The protein localises to the cell inner membrane. The catalysed reaction is n lipid-linked O-antigen repeat units = a lipid-linked O antigen + (n-1) polyisoprenyl diphosphate.. Its pathway is bacterial outer membrane biogenesis; LPS O-antigen biosynthesis. Functionally, polymerase involved in the biosynthesis of the lipopolysaccharide (LPS). Catalyzes the polymerization of the O-antigen repeat units on the periplasmic face of the inner membrane, leading to the formation of the lipid-linked O-antigen molecule. The sequence is that of O-antigen polymerase from Shigella dysenteriae.